The following is a 247-amino-acid chain: Probable proteasome subunit alpha type-5 (247 aa).

Position 55 is a phosphothreonine (Thr55).

This sequence belongs to the peptidase T1A family. In terms of assembly, the 26S proteasome consists of a 20S proteasome core and two 19S regulatory subunits. The 20S proteasome core is composed of 28 subunits that are arranged in four stacked rings, resulting in a barrel-shaped structure. The two end rings are each formed by seven alpha subunits, and the two central rings are each formed by seven beta subunits. The catalytic chamber with the active sites is on the inside of the barrel.

Its subcellular location is the cytoplasm. It localises to the nucleus. Its function is as follows. The proteasome is a multicatalytic proteinase complex which is characterized by its ability to cleave peptides with Arg, Phe, Tyr, Leu, and Glu adjacent to the leaving group at neutral or slightly basic pH. The proteasome has an ATP-dependent proteolytic activity. The polypeptide is Probable proteasome subunit alpha type-5 (pup2) (Schizosaccharomyces pombe (strain 972 / ATCC 24843) (Fission yeast)).